We begin with the raw amino-acid sequence, 97 residues long: Aspartyl/glutamyl-tRNA(Asn/Gln) amidotransferase subunit C (97 aa).

It belongs to the GatC family. Heterotrimer of A, B and C subunits.

It catalyses the reaction L-glutamyl-tRNA(Gln) + L-glutamine + ATP + H2O = L-glutaminyl-tRNA(Gln) + L-glutamate + ADP + phosphate + H(+). The catalysed reaction is L-aspartyl-tRNA(Asn) + L-glutamine + ATP + H2O = L-asparaginyl-tRNA(Asn) + L-glutamate + ADP + phosphate + 2 H(+). Functionally, allows the formation of correctly charged Asn-tRNA(Asn) or Gln-tRNA(Gln) through the transamidation of misacylated Asp-tRNA(Asn) or Glu-tRNA(Gln) in organisms which lack either or both of asparaginyl-tRNA or glutaminyl-tRNA synthetases. The reaction takes place in the presence of glutamine and ATP through an activated phospho-Asp-tRNA(Asn) or phospho-Glu-tRNA(Gln). In Anaeromyxobacter dehalogenans (strain 2CP-C), this protein is Aspartyl/glutamyl-tRNA(Asn/Gln) amidotransferase subunit C.